The sequence spans 124 residues: MPTINQLVRHGRKVIKEKSKSPALQGHPQKRGVCVRVSTMTPKKPNSALRKIARVRLSNGIEVTAYIPGIGHNLQEHSVVLVRGGRVKDLPGIRYKIIRGALDTDGVENRKQSRSKYGTKRPKK.

Residue Asp89 is modified to 3-methylthioaspartic acid. A disordered region spans residues Thr104–Lys124. Residues Gln112–Lys124 are compositionally biased toward basic residues.

The protein belongs to the universal ribosomal protein uS12 family. As to quaternary structure, part of the 30S ribosomal subunit. Contacts proteins S8 and S17. May interact with IF1 in the 30S initiation complex.

In terms of biological role, with S4 and S5 plays an important role in translational accuracy. Functionally, interacts with and stabilizes bases of the 16S rRNA that are involved in tRNA selection in the A site and with the mRNA backbone. Located at the interface of the 30S and 50S subunits, it traverses the body of the 30S subunit contacting proteins on the other side and probably holding the rRNA structure together. The combined cluster of proteins S8, S12 and S17 appears to hold together the shoulder and platform of the 30S subunit. The chain is Small ribosomal subunit protein uS12 from Thermosipho melanesiensis (strain DSM 12029 / CIP 104789 / BI429).